The sequence spans 241 residues: MQSKRSRVLVKFSGEALAGENGFGIDTKILGFIASEIRSLVENKIEVGIVIGGGNIIRGVSAAQDGVIRRTSADYMGMLATVINAVAMQEALEHAGLDVRVQSAIELKEICESYIYRRAIRHLEKGRVVIFGAGTGNPFFTTDTAATLRAIEIGANMIIKATKVDGVYDKDPNKFSDAKKLDTLSYEEALDDRIKVMDDTAIALAKDNRLPIVVCNMFKPGNLLKIIQGDNGLCSVVGQRQ.

Residue 11–14 participates in ATP binding; sequence KFSG. Residues 19-24 form an involved in allosteric activation by GTP region; that stretch reads GENGFG. Gly-53 is a UMP binding site. Gly-54 and Arg-58 together coordinate ATP. Residues Asp-74 and 135–142 contribute to the UMP site; that span reads TGNPFFTT. Residues Thr-162, Tyr-168, and Asp-171 each coordinate ATP.

The protein belongs to the UMP kinase family. As to quaternary structure, homohexamer.

The protein resides in the cytoplasm. The enzyme catalyses UMP + ATP = UDP + ADP. Its pathway is pyrimidine metabolism; CTP biosynthesis via de novo pathway; UDP from UMP (UMPK route): step 1/1. Allosterically activated by GTP. Inhibited by UTP. Its function is as follows. Catalyzes the reversible phosphorylation of UMP to UDP. This is Uridylate kinase from Wolinella succinogenes (strain ATCC 29543 / DSM 1740 / CCUG 13145 / JCM 31913 / LMG 7466 / NCTC 11488 / FDC 602W) (Vibrio succinogenes).